Reading from the N-terminus, the 1370-residue chain is DNA-directed RNA polymerase subunit beta (1370 aa).

It belongs to the RNA polymerase beta chain family. The RNAP catalytic core consists of 2 alpha, 1 beta, 1 beta' and 1 omega subunit. When a sigma factor is associated with the core the holoenzyme is formed, which can initiate transcription.

It catalyses the reaction RNA(n) + a ribonucleoside 5'-triphosphate = RNA(n+1) + diphosphate. Its function is as follows. DNA-dependent RNA polymerase catalyzes the transcription of DNA into RNA using the four ribonucleoside triphosphates as substrates. The chain is DNA-directed RNA polymerase subunit beta from Bordetella avium (strain 197N).